We begin with the raw amino-acid sequence, 324 residues long: Type II restriction enzyme AplI (324 aa).

The protein belongs to the BsuBI/PstI type II restriction endonuclease family. Mg(2+) is required as a cofactor.

The enzyme catalyses Endonucleolytic cleavage of DNA to give specific double-stranded fragments with terminal 5'-phosphates.. Activated by K(+) and Na(+) ions, whereas NH(4)(+) ions appear to inhibit endonuclease activity. Its function is as follows. A P subtype restriction enzyme that recognizes the double-stranded sequence 5'-CTGCAG-3' and cleaves after A-5. The chain is Type II restriction enzyme AplI (aplIR) from Arthrospira platensis (strain NIES-39 / UTEX 3086 / IAM M-135) (Spirulina platensis).